Reading from the N-terminus, the 315-residue chain is GTP cyclohydrolase MptA (315 aa).

The protein belongs to the GTP cyclohydrolase IV family. As to quaternary structure, homodimer. Fe(2+) is required as a cofactor.

The enzyme catalyses GTP + H2O = 7,8-dihydroneopterin 2',3'-cyclic phosphate + formate + diphosphate + H(+). Its pathway is cofactor biosynthesis; 5,6,7,8-tetrahydromethanopterin biosynthesis. In terms of biological role, converts GTP to 7,8-dihydro-D-neopterin 2',3'-cyclic phosphate, the first intermediate in the biosynthesis of coenzyme methanopterin. In Methanococcus maripaludis (strain C5 / ATCC BAA-1333), this protein is GTP cyclohydrolase MptA.